Consider the following 815-residue polypeptide: Kinesin heavy chain (815 aa).

Residues 11–329 (GVQVFCRIRP…LLFGARAKTI (319 aa)) form the Kinesin motor domain. Residue 88–95 (GQTSSGKT) participates in ATP binding. Coiled coils occupy residues 335 to 374 (INEE…RWRA), 422 to 554 (PITD…LDEC), and 695 to 785 (PAQK…RMNA). A disordered region spans residues 788-815 (IVKPIRPGQVYTSPSAGMSQGAPNGSNA). Over residues 797 to 815 (VYTSPSAGMSQGAPNGSNA) the composition is skewed to polar residues.

Belongs to the TRAFAC class myosin-kinesin ATPase superfamily. Kinesin family. Kinesin subfamily. As to quaternary structure, oligomer composed of two heavy chains and two light chains.

It is found in the cytoplasm. The protein localises to the cytoskeleton. Its function is as follows. Microtubule-dependent motor protein required for organelle transport. Plays a role in endosome transport. Required for the transport of mitochondria along the axon of motor neurons. Involved in the nuclear migration of hyp7 hypodermal precursor cells. Required for the formation of dendritic branches of PVD sensory neurons. In non-ciliated neurons such as the PVD and PHC neurons, required for the organization of minus-end out microtubules in dendrites. Also required for the minus-end out orientation of microtubules in dendrites of AQR gas-sensing neurons. Involved in the localization of unc-33 to neurites. Positively regulates cilium position and dendrite morphogenesis in the postembryonic AQR and PQR gas-sensing neurons. Plays a more prominent role in regulating dendrite morphogenesis in AQR than in PQR neurons. Plays a role in regulating the localization of grdn-1 to the distal dendrites of AQR sensory neurons. The chain is Kinesin heavy chain from Caenorhabditis elegans.